The chain runs to 1051 residues: MEPWVPQTQGRTTGPSRDTNRGLQSGHYRPRLHSQYSGDKYHQWQDAHKNSKSQQDLRDDHQQSHSVSRSGEWSQPVSGADYLKGSYPSHLYSRSGYGDPYQRYHTPTPRDEYAYGNYYYHGHPQLLPEERVARQGSPYIWHEDHGDQRYFGEHHREKHNGTFGANSDTQFQFTSKNPYRDSPASVSGQEQPGEFFPESEAQKQKPLLTSKSSLLQQHESGLSSSSYELSQYMTAAPEEYEPMVSAAWRPIQADDTSATVPKAPMRFYVPHVSVSFGPGGQLVCVPPNSPADGQTALVEVHSMEVLLNDFEDQEEMRAFPGPLIREDIHKVDIMTFCQQKATQCLKSETPGSRDSALLWQLLVLLCRQNGSMVGSDIAELLMQDCKKLEKYKRQPPVANLINLTDEDWPVLSSGTRDLLTGEIPPNVDTPAQIVEKFTKLLYYGRKKEALEWAMKNHLWGHALFLASKMDPRTYNWVMSGFTSTLALNDPLQTLFQLMSGRIPQAATVCGDKQWGDWRPHLAVILSNQAGDTELYQRAIVSMGDTLAGKGLVEASHFCYLMAHVPFGHYTVKTDHLALVGSSHSQEFMKFATIEAIQRTEIFEYCQMLGRPKSFIPSFQVYKLLYASRLADYGLASQALHYCEAIGAAVLSQEGSSHPVLLAELIKLAEKLKLSDPLVLERRRGDRDLEPDWLVQLRRKHKDLEQNRTGAPRDPDSTPSDIYGAGGTTDTPYPDLSGHQNYSEDSEYSSTLWSTAEQTSLTNPLAQQSFPLQRDTYSGHMGTPVPLYSVPATHLAVTSGASGSSVAVTGTPGGRVGEDMLRTHPAFGENTMTQEPLEDPDGLEVISSLQTPAAPRVPSFSEDSAASAKEDEEGSSDGADKPSHPDASQKGKLGDGKNTKSSGFGWFSWFRSKPASSVSTSGDEDSSDSSDSEESPRASSPHHASPGLSPTPPLTSPSLPGASTFSRGTGGSILQGSSNSSGIAEGMGIGGFSGTQGVSSEFYSQPGALPPPPTLQGAVPLYNPSQVPQLPTASSLNRPNRLAQRRYPTQPC.

The span at 1–23 (MEPWVPQTQGRTTGPSRDTNRGL) shows a compositional bias: polar residues. The interval 1–109 (MEPWVPQTQG…PYQRYHTPTP (109 aa)) is disordered. Positions 39 to 63 (DKYHQWQDAHKNSKSQQDLRDDHQQ) are enriched in basic and acidic residues. Polar residues predominate over residues 64-77 (SHSVSRSGEWSQPV). Phosphoserine occurs at positions 70 and 137. The segment at 157 to 203 (EKHNGTFGANSDTQFQFTSKNPYRDSPASVSGQEQPGEFFPESEAQK) is disordered. A compositionally biased stretch (polar residues) spans 163-177 (FGANSDTQFQFTSKN). S182, S185, and S245 each carry phosphoserine. The segment at 263–708 (APMRFYVPHV…KHKDLEQNRT (446 aa)) is central conserved domain (CCD); required for localization to endoplasmic reticulum exit sites. Positions 703 to 715 (LEQNRTGAPRDPD) are enriched in basic and acidic residues. Disordered stretches follow at residues 703-754 (LEQN…LWST), 798-820 (SGAS…EDML), and 850-1051 (TPAA…TQPC). A compositionally biased stretch (polar residues) spans 737 to 754 (GHQNYSEDSEYSSTLWST). A compositionally biased stretch (low complexity) spans 798–809 (SGASGSSVAVTG). Position 850 is a phosphothreonine (T850). Residues S860, S863, S866, S874, and S875 each carry the phosphoserine modification. Residues 877–897 (GADKPSHPDASQKGKLGDGKN) are compositionally biased toward basic and acidic residues. Residues 900-920 (SSGFGWFSWFRSKPASSVSTS) are compositionally biased toward low complexity. Acidic residues predominate over residues 921–932 (GDEDSSDSSDSE). Residues 936–947 (RASSPHHASPGL) are compositionally biased toward low complexity. Gly residues predominate over residues 984 to 993 (EGMGIGGFSG). Polar residues predominate over residues 1022–1037 (NPSQVPQLPTASSLNR).

The protein belongs to the SEC16 family. SEC16A and SEC16B are each present in multiple copies in a heteromeric complex. Interacts with TFG. Interacts with SEC13. As to expression, liver.

It localises to the endoplasmic reticulum membrane. Its subcellular location is the golgi apparatus membrane. Functionally, plays a role in the organization of the endoplasmic reticulum exit sites (ERES), also known as transitional endoplasmic reticulum (tER). Required for secretory cargo traffic from the endoplasmic reticulum to the Golgi apparatus. Involved in peroxisome biogenesis. Regulates the transport of peroxisomal biogenesis factors PEX3 and PEX16 from the ER to peroxisomes. This is Protein transport protein Sec16B (Sec16b) from Mus musculus (Mouse).